Reading from the N-terminus, the 277-residue chain is Caspase-3 (277 aa).

At methionine 1 the chain carries N-acetylmethionine. 2 consecutive propeptides follow at residues 1–9 and 10–28; these read MENNETSVD and AKSI…KSMD. Position 11 is an N6-acetyllysine (lysine 11). Serine 26 carries the post-translational modification Phosphoserine. Catalysis depends on residues histidine 121 and cysteine 163. The residue at position 163 (cysteine 163) is an S-nitrosocysteine; in inhibited form.

Belongs to the peptidase C14A family. As to quaternary structure, heterotetramer that consists of two anti-parallel arranged heterodimers, each one formed by a 17 kDa (p17) and a 12 kDa (p12) subunit. Interacts with BIRC6/bruce. In terms of processing, cleavage by granzyme B, caspase-6, caspase-8 and caspase-10 generates the two active subunits. Additional processing of the propeptides is likely due to the autocatalytic activity of the activated protease. Active heterodimers between the small subunit of caspase-7 protease and the large subunit of caspase-3 also occur and vice versa. S-nitrosylated on its catalytic site cysteine in unstimulated cell lines and denitrosylated upon activation of the Fas apoptotic pathway, associated with an increase in intracellular caspase activity. Fas therefore activates caspase-3 not only by inducing the cleavage of the caspase zymogen to its active subunits, but also by stimulating the denitrosylation of its active site thiol. Post-translationally, ubiquitinated by BIRC6; this activity is inhibited by DIABLO/SMAC.

It is found in the cytoplasm. It catalyses the reaction Strict requirement for an Asp residue at positions P1 and P4. It has a preferred cleavage sequence of Asp-Xaa-Xaa-Asp-|- with a hydrophobic amino-acid residue at P2 and a hydrophilic amino-acid residue at P3, although Val or Ala are also accepted at this position.. With respect to regulation, inhibited by BIRC6; following inhibition of BIRC6-caspase binding by DIABLO/SMAC, BIRC6 is subjected to caspase cleavage, leading to an increase in active caspases. Functionally, involved in the activation cascade of caspases responsible for apoptosis execution. At the onset of apoptosis, it proteolytically cleaves poly(ADP-ribose) polymerase PARP1 at a '216-Asp-|-Gly-217' bond. Cleaves and activates sterol regulatory element binding proteins (SREBPs) between the basic helix-loop-helix leucine zipper domain and the membrane attachment domain. Cleaves and activates caspase-6, -7 and -9 (CASP6, CASP7 and CASP9, respectively). Cleaves and inactivates interleukin-18 (IL18). Triggers cell adhesion in sympathetic neurons through RET cleavage. Cleaves IL-1 beta between an Asp and an Ala, releasing the mature cytokine which is involved in a variety of inflammatory processes. Cleaves and inhibits serine/threonine-protein kinase AKT1 in response to oxidative stress. Acts as an inhibitor of type I interferon production during virus-induced apoptosis by mediating cleavage of antiviral proteins CGAS, IRF3 and MAVS, thereby preventing cytokine overproduction. Also involved in pyroptosis by mediating cleavage and activation of gasdermin-E (GSDME). Cleaves XRCC4 and phospholipid scramblase proteins XKR4, XKR8 and XKR9, leading to promote phosphatidylserine exposure on apoptotic cell surface. Cleaves BIRC6 following inhibition of BIRC6-caspase binding by DIABLO/SMAC. The protein is Caspase-3 (CASP3) of Oryctolagus cuniculus (Rabbit).